The chain runs to 302 residues: MDQKRLTHLRQLEAESIHIIREVAAEFSNPVMLYSIGKDSSVMLHLARKAFYPGTLPFPLLHVDTGWKFREMYEFRDRTAKAYGCELLVHKNPEGVAMGINPFVHGSAKHTDIMKTEGLKQALNKYGFDAAFGGARRDEEKSRAKERIYSFRDRFHRWDPKNQRPELWHNYNGQINKGESIRVFPLSNWTEQDIWQYIWLENIDIVPLYLAAERPVLERDGMLMMIDDNRIDLQPGEVIKKRMVRFRTLGCWPLTGAVESNAQTLPEIIEEMLVSTTSERQGRVIDRDQAGSMELKKRQGYF.

It belongs to the PAPS reductase family. CysD subfamily. In terms of assembly, heterodimer composed of CysD, the smaller subunit, and CysN.

It catalyses the reaction sulfate + ATP + H(+) = adenosine 5'-phosphosulfate + diphosphate. The protein operates within sulfur metabolism; hydrogen sulfide biosynthesis; sulfite from sulfate: step 1/3. Its function is as follows. With CysN forms the ATP sulfurylase (ATPS) that catalyzes the adenylation of sulfate producing adenosine 5'-phosphosulfate (APS) and diphosphate, the first enzymatic step in sulfur assimilation pathway. APS synthesis involves the formation of a high-energy phosphoric-sulfuric acid anhydride bond driven by GTP hydrolysis by CysN coupled to ATP hydrolysis by CysD. This Escherichia coli O81 (strain ED1a) protein is Sulfate adenylyltransferase subunit 2.